A 675-amino-acid chain; its full sequence is Pesticidal crystal protein Cry10Aa (675 aa).

The protein belongs to the delta endotoxin family.

Functionally, promotes colloidosmotic lysis by binding to the midgut epithelial cells of mosquitos. Active on Aedes aegypti. The protein is Pesticidal crystal protein Cry10Aa (cry10Aa) of Bacillus thuringiensis subsp. israelensis.